A 366-amino-acid polypeptide reads, in one-letter code: Ribosomal RNA large subunit methyltransferase M (366 aa).

S-adenosyl-L-methionine-binding positions include S188, 221–224 (CPGG), D240, D260, and D277. Residue K306 is the Proton acceptor of the active site.

It belongs to the class I-like SAM-binding methyltransferase superfamily. RNA methyltransferase RlmE family. RlmM subfamily. Monomer.

The protein localises to the cytoplasm. The enzyme catalyses cytidine(2498) in 23S rRNA + S-adenosyl-L-methionine = 2'-O-methylcytidine(2498) in 23S rRNA + S-adenosyl-L-homocysteine + H(+). Functionally, catalyzes the 2'-O-methylation at nucleotide C2498 in 23S rRNA. This chain is Ribosomal RNA large subunit methyltransferase M, found in Pectobacterium carotovorum subsp. carotovorum (strain PC1).